Here is a 1117-residue protein sequence, read N- to C-terminus: Protein rliB (1117 aa).

Positions 1 to 23 (MKNINNKILKIFILFLAICSVKS) are cleaved as a signal peptide. 4 N-linked (GlcNAc...) asparagine glycosylation sites follow: Asn136, Asn195, Asn279, and Asn318. The G8 domain maps to 266-392 (STWSNNLVPQ…YHNSWTKLAS (127 aa)). 2 PbH1 repeats span residues 522–544 (VQKS…TIHG) and 545–567 (TNNL…YLED). N-linked (GlcNAc...) asparagine glycosylation is found at Asn547 and Asn605. A PbH1 3 repeat occupies 621 to 642 (NAYNTIIGNSASGGWAGFSFPN). Residues Asn728, Asn845, Asn1030, Asn1044, Asn1091, and Asn1107 are each glycosylated (N-linked (GlcNAc...) asparagine).

The protein belongs to the comF family.

Its subcellular location is the secreted. The chain is Protein rliB (rliB) from Dictyostelium discoideum (Social amoeba).